The following is a 210-amino-acid chain: Isomeliandiol synthase ISM1 (210 aa).

5 consecutive transmembrane segments (helical) span residues 17 to 37 (FTLH…TWFI), 50 to 70 (LLCW…YFVF), 107 to 127 (IEGM…YAIV), 135 to 155 (ILQF…FLTA), and 172 to 192 (YYVG…INFW). The EXPERA domain maps to 46-188 (GDRLLLCWWA…IWIIVPSLIA (143 aa)).

Belongs to the EBP family.

The protein resides in the membrane. It catalyses the reaction 7,8-epoxymelianol = isomeliandiol. Its pathway is secondary metabolite biosynthesis; terpenoid biosynthesis. Functionally, isomerase involved in the biosynthesis of limonoids and quassinoids triterpene natural products such as ailanthone, chaparrinone, glaucarubinone and amarolide, allelopathic degraded triterpene lactones inhibiting the growth of other plants, and possessing antimalarial, antifeedant, insecticidal, anti-inflammatory and anticancer activities. Catalyzes the conversion of 7,8-epoxymelianol to isomeliandiol via skeletal rearrangements. The protein is Isomeliandiol synthase ISM1 of Ailanthus altissima (Tree-of-heaven).